Consider the following 126-residue polypeptide: MNLDFAKSDGLVTAVIQDHASGRVLMVGYMNQEAFNKTVETGFATFWSRSRKKLWLKGESSGHRLVVKEISTDCDLDAVLVKVEAQGPGVCHEGYESCFFRRLDAGEWKVADNPTYDPGAVYGGKS.

Residue D73 participates in Mg(2+) binding. C74 contributes to the Zn(2+) binding site. Mg(2+)-binding residues include D75 and D77. Zn(2+)-binding residues include C91 and C98.

It belongs to the PRA-CH family. As to quaternary structure, homodimer. Requires Mg(2+) as cofactor. Zn(2+) is required as a cofactor.

Its subcellular location is the cytoplasm. The catalysed reaction is 1-(5-phospho-beta-D-ribosyl)-5'-AMP + H2O = 1-(5-phospho-beta-D-ribosyl)-5-[(5-phospho-beta-D-ribosylamino)methylideneamino]imidazole-4-carboxamide. Its pathway is amino-acid biosynthesis; L-histidine biosynthesis; L-histidine from 5-phospho-alpha-D-ribose 1-diphosphate: step 3/9. Its function is as follows. Catalyzes the hydrolysis of the adenine ring of phosphoribosyl-AMP. In Solibacter usitatus (strain Ellin6076), this protein is Phosphoribosyl-AMP cyclohydrolase.